Here is a 756-residue protein sequence, read N- to C-terminus: Serine/threonine-protein kinase tousled-like 1-B (756 aa).

Composition is skewed to low complexity over residues 1-12 (MSVQSNSNSSGS) and 23-34 (STGSPTPGSVSP). Disordered regions lie at residues 1-56 (MSVQ…LDPR) and 69-185 (VSGN…QNSS). Over residues 45-56 (EGMDELHSLDPR) the composition is skewed to basic and acidic residues. Gly residues predominate over residues 72-85 (NTGGSTGSASGGPK). Residues 93–103 (SSHSFGSLGSS) show a composition bias toward low complexity. The span at 104 to 120 (SDKESETPEKKHFESSR) shows a compositional bias: basic and acidic residues. A coiled-coil region spans residues 243-268 (DLRRQIDEQQKLLERFKERLNKCTTM). Residues 339-375 (KLLAKRKPSSTPSSQSPTPNESKQRKTKAVNGADNDP) are disordered. Residues 347 to 357 (SSTPSSQSPTP) are compositionally biased toward low complexity. Residues 397–435 (FKLRLGHLKKEEAEIQAELERLERVRNLHIRELKRINNE) adopt a coiled-coil conformation. The Protein kinase domain maps to 450–728 (YLLLHLLGRG…VHQLGSDSYL (279 aa)). Residues 456 to 464 (LGRGGFSEV) and K479 each bind ATP. D580 functions as the Proton acceptor in the catalytic mechanism. The tract at residues 734 to 756 (RSNSSGNLQATPASPAPSGIISY) is disordered. The span at 735 to 745 (SNSSGNLQATP) shows a compositional bias: polar residues.

This sequence belongs to the protein kinase superfamily. Ser/Thr protein kinase family. Mg(2+) serves as cofactor.

The protein localises to the nucleus. It catalyses the reaction L-seryl-[protein] + ATP = O-phospho-L-seryl-[protein] + ADP + H(+). It carries out the reaction L-threonyl-[protein] + ATP = O-phospho-L-threonyl-[protein] + ADP + H(+). The sequence is that of Serine/threonine-protein kinase tousled-like 1-B (tlk1b) from Danio rerio (Zebrafish).